We begin with the raw amino-acid sequence, 106 residues long: Iron-sulfur cluster assembly protein CyaY (106 aa).

The protein belongs to the frataxin family.

Its function is as follows. Involved in iron-sulfur (Fe-S) cluster assembly. May act as a regulator of Fe-S biogenesis. This chain is Iron-sulfur cluster assembly protein CyaY, found in Dickeya chrysanthemi (Pectobacterium chrysanthemi).